Reading from the N-terminus, the 471-residue chain is MKPKTIIEKIWENHVVYREEGKPDLLYIDLHLVHEVTSPQAFEGLRQNGRKVRRPDLTFATMDHNVPTVNRFVITDEVARNQIAALERNCREFGIPLADLHSEEQGIVHVIGPELGLTQPGKTIVCGDSHTSTHGAFGALAFGIGTSEVEHVLATQTLWQHKPKTLQIRINGQLGKGVTAKDVILAIIGRYGVGVGTGYIIEFTGEAIRRMSMEERMTICNMSIEAGARAGLISPDETTFAYLRGRKYAPKGEEFDQAVERWRALASDEGAEYDKTIEIDASTIAPMVTWGTNPSMSTSVDGTVPDPEQFESETERNAVRRALEYMGLKPGMSITEIPVQHVFIGSCTNSRISDLREAAKIVKGQKVAPGVRALVVPGSQQVKKQAEEEGLAQIFLDAGFEWRDAGCSACLGMNPDIIPEGEHCASTSNRNFEGRQGKGARTHLVSPAMAAAAAIYGRFVDVRQLEAEPVR.

3 residues coordinate [4Fe-4S] cluster: cysteine 347, cysteine 407, and cysteine 410.

The protein belongs to the aconitase/IPM isomerase family. LeuC type 1 subfamily. As to quaternary structure, heterodimer of LeuC and LeuD. [4Fe-4S] cluster is required as a cofactor.

It catalyses the reaction (2R,3S)-3-isopropylmalate = (2S)-2-isopropylmalate. The protein operates within amino-acid biosynthesis; L-leucine biosynthesis; L-leucine from 3-methyl-2-oxobutanoate: step 2/4. Catalyzes the isomerization between 2-isopropylmalate and 3-isopropylmalate, via the formation of 2-isopropylmaleate. This chain is 3-isopropylmalate dehydratase large subunit, found in Geobacillus thermodenitrificans (strain NG80-2).